Reading from the N-terminus, the 79-residue chain is Small ribosomal subunit protein bS16 (79 aa).

This sequence belongs to the bacterial ribosomal protein bS16 family.

In Nitratidesulfovibrio vulgaris (strain ATCC 29579 / DSM 644 / CCUG 34227 / NCIMB 8303 / VKM B-1760 / Hildenborough) (Desulfovibrio vulgaris), this protein is Small ribosomal subunit protein bS16.